The following is a 469-amino-acid chain: GTPase Der (469 aa).

2 consecutive EngA-type G domains span residues 3–166 (PVIA…PEDE) and 177–350 (LRLA…ESAN). GTP is bound by residues 9–16 (GRPNVGKS), 56–60 (DTGGI), 118–121 (NKVD), 183–190 (GRPNVGKS), 230–234 (DTAGV), and 295–298 (NKWD). One can recognise a KH-like domain in the interval 351 to 435 (LKVSPAKLTQ…PVKIEFKTSE (85 aa)).

Belongs to the TRAFAC class TrmE-Era-EngA-EngB-Septin-like GTPase superfamily. EngA (Der) GTPase family. As to quaternary structure, associates with the 50S ribosomal subunit.

Functionally, GTPase that plays an essential role in the late steps of ribosome biogenesis. In Acinetobacter baumannii (strain SDF), this protein is GTPase Der.